We begin with the raw amino-acid sequence, 276 residues long: Formamidopyrimidine-DNA glycosylase (276 aa).

P2 serves as the catalytic Schiff-base intermediate with DNA. E3 acts as the Proton donor in catalysis. K58 (proton donor; for beta-elimination activity) is an active-site residue. Residues H94, R112, and R157 each contribute to the DNA site. An FPG-type zinc finger spans residues 242–276 (FVYDRAGQPCRVCGTPIKQIVQGQRSTYYCPTCQR). R266 acts as the Proton donor; for delta-elimination activity in catalysis.

It belongs to the FPG family. As to quaternary structure, monomer. Requires Zn(2+) as cofactor.

The catalysed reaction is Hydrolysis of DNA containing ring-opened 7-methylguanine residues, releasing 2,6-diamino-4-hydroxy-5-(N-methyl)formamidopyrimidine.. It catalyses the reaction 2'-deoxyribonucleotide-(2'-deoxyribose 5'-phosphate)-2'-deoxyribonucleotide-DNA = a 3'-end 2'-deoxyribonucleotide-(2,3-dehydro-2,3-deoxyribose 5'-phosphate)-DNA + a 5'-end 5'-phospho-2'-deoxyribonucleoside-DNA + H(+). In terms of biological role, involved in base excision repair of DNA damaged by oxidation or by mutagenic agents. Acts as a DNA glycosylase that recognizes and removes damaged bases. Has a preference for oxidized purines, such as 7,8-dihydro-8-oxoguanine (8-oxoG). Has AP (apurinic/apyrimidinic) lyase activity and introduces nicks in the DNA strand. Cleaves the DNA backbone by beta-delta elimination to generate a single-strand break at the site of the removed base with both 3'- and 5'-phosphates. The protein is Formamidopyrimidine-DNA glycosylase of Paraburkholderia phymatum (strain DSM 17167 / CIP 108236 / LMG 21445 / STM815) (Burkholderia phymatum).